Consider the following 373-residue polypeptide: Erythronate-4-phosphate dehydrogenase (373 aa).

Residues S45 and T66 each contribute to the substrate site. NAD(+) contacts are provided by D146 and T175. R208 is a catalytic residue. Residue D232 participates in NAD(+) binding. The active site involves E237. H254 serves as the catalytic Proton donor. G257 is a binding site for NAD(+). Substrate is bound at residue Y258.

It belongs to the D-isomer specific 2-hydroxyacid dehydrogenase family. PdxB subfamily. In terms of assembly, homodimer.

It localises to the cytoplasm. It carries out the reaction 4-phospho-D-erythronate + NAD(+) = (R)-3-hydroxy-2-oxo-4-phosphooxybutanoate + NADH + H(+). It functions in the pathway cofactor biosynthesis; pyridoxine 5'-phosphate biosynthesis; pyridoxine 5'-phosphate from D-erythrose 4-phosphate: step 2/5. Catalyzes the oxidation of erythronate-4-phosphate to 3-hydroxy-2-oxo-4-phosphonooxybutanoate. In Serratia proteamaculans (strain 568), this protein is Erythronate-4-phosphate dehydrogenase.